The chain runs to 411 residues: 2,3-bisphosphoglycerate-independent phosphoglycerate mutase (411 aa).

This sequence belongs to the BPG-independent phosphoglycerate mutase family. A-PGAM subfamily.

It catalyses the reaction (2R)-2-phosphoglycerate = (2R)-3-phosphoglycerate. Its pathway is carbohydrate degradation; glycolysis; pyruvate from D-glyceraldehyde 3-phosphate: step 3/5. Catalyzes the interconversion of 2-phosphoglycerate and 3-phosphoglycerate. This chain is 2,3-bisphosphoglycerate-independent phosphoglycerate mutase, found in Thermococcus gammatolerans (strain DSM 15229 / JCM 11827 / EJ3).